Reading from the N-terminus, the 332-residue chain is Glycerol-3-phosphate dehydrogenase [NAD(P)+] (332 aa).

Residues Ser-11, Phe-12, Lys-32, and Lys-106 each coordinate NADPH. Residues Lys-106, Gly-137, and Ser-139 each coordinate sn-glycerol 3-phosphate. Ala-141 is a binding site for NADPH. Residues Lys-192, Asp-245, Ser-255, Arg-256, and Asn-257 each coordinate sn-glycerol 3-phosphate. Residue Lys-192 is the Proton acceptor of the active site. Residue Arg-256 participates in NADPH binding. Val-280 and Glu-282 together coordinate NADPH.

The protein belongs to the NAD-dependent glycerol-3-phosphate dehydrogenase family.

It is found in the cytoplasm. The enzyme catalyses sn-glycerol 3-phosphate + NAD(+) = dihydroxyacetone phosphate + NADH + H(+). The catalysed reaction is sn-glycerol 3-phosphate + NADP(+) = dihydroxyacetone phosphate + NADPH + H(+). It functions in the pathway membrane lipid metabolism; glycerophospholipid metabolism. Catalyzes the reduction of the glycolytic intermediate dihydroxyacetone phosphate (DHAP) to sn-glycerol 3-phosphate (G3P), the key precursor for phospholipid synthesis. This Staphylococcus saprophyticus subsp. saprophyticus (strain ATCC 15305 / DSM 20229 / NCIMB 8711 / NCTC 7292 / S-41) protein is Glycerol-3-phosphate dehydrogenase [NAD(P)+].